A 301-amino-acid chain; its full sequence is MEPQDLKTVLGAGLLSFPVTPFGPDGGFNEAVYREHVGWLASFEAAALFAAGGTGEFFSLAPDEIPAIVRAAKAAAGNTPIISGCGHGTEVAISIAKAAEKAGADGILLLPHYLIDAPQAGLYNHIKRVCDSIGIGVMVYNRDNSILQADTLKRLCDVCPNLVGFKDGSGELGLVRQISATMGDRLTYLGGMPTAELFAEAYLAAGFTTYSSAVFNFVPELAVRFYKALRAGRRAECETLLKDFFYPFMAIRNRSKGYAVAAIKAGVRLRGYDAGPVRSPLVDLTSEEMDMMASLMASVDR.

The protein belongs to the DapA family.

It catalyses the reaction 5-dehydro-4-deoxy-D-glucarate + H(+) = 2,5-dioxopentanoate + CO2 + H2O. Its pathway is carbohydrate acid metabolism; D-glucarate degradation; 2,5-dioxopentanoate from D-glucarate: step 2/2. The protein is Probable 5-dehydro-4-deoxyglucarate dehydratase of Chelativorans sp. (strain BNC1).